Reading from the N-terminus, the 538-residue chain is Chaperonin GroEL 1 (538 aa).

ATP contacts are provided by residues 29–32 (TLGP), 86–90 (DGTTT), Gly-413, and Asp-494.

The protein belongs to the chaperonin (HSP60) family. Forms a cylinder of 14 subunits composed of two heptameric rings stacked back-to-back. Interacts with the co-chaperonin GroES.

The protein localises to the cytoplasm. The catalysed reaction is ATP + H2O + a folded polypeptide = ADP + phosphate + an unfolded polypeptide.. Its function is as follows. Together with its co-chaperonin GroES, plays an essential role in assisting protein folding. The GroEL-GroES system forms a nano-cage that allows encapsulation of the non-native substrate proteins and provides a physical environment optimized to promote and accelerate protein folding. The polypeptide is Chaperonin GroEL 1 (Mycolicibacterium paratuberculosis (strain ATCC BAA-968 / K-10) (Mycobacterium paratuberculosis)).